The chain runs to 523 residues: Arabinose import ATP-binding protein AraG (523 aa).

2 ABC transporter domains span residues 20-255 (LAFR…MVGR) and 268-511 (IGSE…MLRT). 52 to 59 (GENGAGKS) is a binding site for ATP.

This sequence belongs to the ABC transporter superfamily. Arabinose importer (TC 3.A.1.2.2) family. In terms of assembly, the complex is composed of two ATP-binding proteins (AraG), two transmembrane proteins (AraH) and a solute-binding protein (AraF).

Its subcellular location is the cell inner membrane. The enzyme catalyses L-arabinose(out) + ATP + H2O = L-arabinose(in) + ADP + phosphate + H(+). Part of the ABC transporter complex AraFGH involved in arabinose import. Responsible for energy coupling to the transport system. This chain is Arabinose import ATP-binding protein AraG, found in Yersinia pestis bv. Antiqua (strain Antiqua).